Reading from the N-terminus, the 434-residue chain is Enolase (434 aa).

Position 163 (Gln163) interacts with (2R)-2-phosphoglycerate. Catalysis depends on Glu205, which acts as the Proton donor. Mg(2+) is bound by residues Asp242, Glu291, and Asp318. Positions 343, 372, 373, and 394 each coordinate (2R)-2-phosphoglycerate. The active-site Proton acceptor is the Lys343.

This sequence belongs to the enolase family. It depends on Mg(2+) as a cofactor.

The protein resides in the cytoplasm. It localises to the secreted. Its subcellular location is the cell surface. The enzyme catalyses (2R)-2-phosphoglycerate = phosphoenolpyruvate + H2O. Its pathway is carbohydrate degradation; glycolysis; pyruvate from D-glyceraldehyde 3-phosphate: step 4/5. Catalyzes the reversible conversion of 2-phosphoglycerate (2-PG) into phosphoenolpyruvate (PEP). It is essential for the degradation of carbohydrates via glycolysis. The protein is Enolase of Streptococcus thermophilus (strain ATCC BAA-491 / LMD-9).